The sequence spans 301 residues: uncharacterized protein (301 aa).

Residues Glu146, Glu148, and Asp177 each contribute to the a divalent metal cation site.

This sequence belongs to the FAH family.

This is an uncharacterized protein from Staphylococcus saprophyticus subsp. saprophyticus (strain ATCC 15305 / DSM 20229 / NCIMB 8711 / NCTC 7292 / S-41).